The following is a 367-amino-acid chain: MDVVFALGHFCEAEGPSIIFCTQKLHRSTVSKFFEHPTSKRSIGVTENGNDSPEAFKNELDNRNNADSQSLQSSTESLFKADSEDYLCKKVSKGPESPRVNSFHNSYSRNQSPISRKSSCVTCSTVLPLEFSVPDVQPRLYTNSSTNPDVLYMSSQHPHTQQRYSTLKRLMVRCLSCEYSTLSEASDSMSNPLFFGDQDNGYVISQSFSLRDPSARGGLRRYAIIATCPNQLDLILRYSFISEKFLHIVQFLRISSFNTKNDYSSSRSKTTASSSNGTFASPSFNISSLSGSSNIGTAPSYEISSSIGANVSSLAHTQRLPSFSFLRRRDDIGEGRSLVDITCWDGIFVGLHSSFSWILEVWDLLVV.

Disordered stretches follow at residues 41-75 and 92-115; these read RSIG…QSST and SKGP…SPIS. Positions 54-64 are enriched in basic and acidic residues; the sequence is EAFKNELDNRN. 2 stretches are compositionally biased toward polar residues: residues 65-75 and 99-115; these read NADSQSLQSST and RVNS…SPIS. Positions 131–302 constitute a uDENN FLCN/SMCR8-type domain; sequence FSVPDVQPRL…SNIGTAPSYE (172 aa).

This sequence belongs to the folliculin family.

The protein localises to the nucleus. Its subcellular location is the cytoplasm. The sequence is that of Folliculin-like protein bhd1 (bhd1) from Schizosaccharomyces pombe (strain 972 / ATCC 24843) (Fission yeast).